A 256-amino-acid polypeptide reads, in one-letter code: uncharacterized protein (256 aa).

4 helical membrane passes run 5–25 (FIEGFETIWTVVRAVVLNYLL), 30–50 (ILSTILYVSAVISWNVSLKVF), 64–84 (VVIFILRIVSLFLWILADPAI), and 105–125 (VGITLYPLYVLLSWAVFLGII). The interval 198–256 (EKTKSLDSISHSSSSSRKSSTELKIPPVETRIVAEIPVPSSVKRRRHRPNKSMGSIKNS) is disordered. Over residues 203–215 (LDSISHSSSSSRK) the composition is skewed to low complexity. 2 positions are modified to phosphoserine: serine 210 and serine 211.

The protein localises to the endoplasmic reticulum membrane. It is found in the nucleus membrane. This is an uncharacterized protein from Schizosaccharomyces pombe (strain 972 / ATCC 24843) (Fission yeast).